A 753-amino-acid polypeptide reads, in one-letter code: Translation initiation factor IF-2 (753 aa).

The tract at residues 1-166 is disordered; it reads MSEKPRRDTG…PVMRPRGPVA (166 aa). 3 stretches are compositionally biased toward low complexity: residues 19-43, 71-81, and 102-122; these read STGQ…ATGA, NARPAAPANAR, and TPAP…TNTR. Over residues 133-146 the composition is skewed to basic and acidic residues; the sequence is PQPEEREREREAVL. A compositionally biased stretch (low complexity) spans 153–162; the sequence is TTTRPVMRPR. Residues 249–418 enclose the tr-type G domain; it reads PRPPVVTIMG…LLVADLEDLR (170 aa). Residues 258–265 form a G1 region; that stretch reads GHVDHGKT. A GTP-binding site is contributed by 258 to 265; that stretch reads GHVDHGKT. Residues 283 to 287 are G2; that stretch reads GITQH. The G3 stretch occupies residues 304-307; sequence DTPG. Residues 304–308 and 358–361 each bind GTP; these read DTPGH and NKID. A G4 region spans residues 358–361; sequence NKID. Positions 394-396 are G5; sequence SAR.

Belongs to the TRAFAC class translation factor GTPase superfamily. Classic translation factor GTPase family. IF-2 subfamily.

It is found in the cytoplasm. Functionally, one of the essential components for the initiation of protein synthesis. Protects formylmethionyl-tRNA from spontaneous hydrolysis and promotes its binding to the 30S ribosomal subunits. Also involved in the hydrolysis of GTP during the formation of the 70S ribosomal complex. The sequence is that of Translation initiation factor IF-2 from Chloroflexus aggregans (strain MD-66 / DSM 9485).